The following is a 111-amino-acid chain: BET1-like protein (111 aa).

The Cytoplasmic portion of the chain corresponds to 1 to 86; that stretch reads MADWARAQSP…MARSGQDNRK (86 aa). 2 positions are modified to phosphoserine: Ser9 and Ser37. The 63-residue stretch at 15-77 folds into the t-SNARE coiled-coil homology domain; it reads EILDRENKRM…TGSVKRFSTM (63 aa). The chain crosses the membrane as a helical; Anchor for type IV membrane protein span at residues 87 to 107; the sequence is LLCGMAVGLIVAFFILSYFLS. The Lumenal portion of the chain corresponds to 108–111; it reads RART.

Component of a SNARE complex consisting of STX5, YKT6, GOSR1 and BET1L. Interacts with STX5.

The protein localises to the golgi apparatus membrane. Its subcellular location is the golgi apparatus. It localises to the trans-Golgi network membrane. Vesicle SNARE required for targeting and fusion of retrograde transport vesicles with the Golgi complex. Required for the integrity of the Golgi complex. The protein is BET1-like protein of Homo sapiens (Human).